Reading from the N-terminus, the 122-residue chain is RxLR effector protein Avh52 (122 aa).

An N-terminal signal peptide occupies residues 1–21 (MRLTSILVLVIAATFHTTGTA). Positions 50–68 (RLLRRVEKDKVDYEQDEQR) match the RxLR-dEER motif. The tract at residues 69–86 (SFGALKDAVKKLNPVTAV) is TAP1-binding. Residues 87 to 98 (KKFFKQRARRKK) form a nuclear localization signal (NLS) region.

This sequence belongs to the RxLR effector family. In terms of assembly, interacts with host acetyl transferase TAP1.

The protein localises to the secreted. It localises to the host nucleus. Its function is as follows. Effector that suppresses plant defense responses during the early stages of pathogen infection. Suppresses cell death induced by effectors and PAMPs in plant hosts. Interacts with host acetyltransferase TAP1 and causes TAP1 relocation into the nucleus where it acetylates histones H2A and H3 during early infection, thereby promoting susceptibility of host plant to P.sojae. The polypeptide is RxLR effector protein Avh52 (Phytophthora sojae (Soybean stem and root rot agent)).